The chain runs to 190 residues: MPRANEIKKGMVLNYNGKLLIVKDIDIQSPSARGAATLYKMRFSDVRTGQKVEERFKGDDILDTITLTRRFVDFSYVDGNEYVFMDKEDYTPYTFTKDQIEEELLFMPEGGMPDMQVLTWDGQLLALELPQTVDLEIVETAPGIKGASASARSKPATLSTGVVIQVPEYLSAGEKIRVHIAERRYMGRAE.

This sequence belongs to the elongation factor P family.

This is Elongation factor P-like protein from Cronobacter sakazakii (strain ATCC BAA-894) (Enterobacter sakazakii).